A 342-amino-acid polypeptide reads, in one-letter code: RNA 3'-terminal phosphate cyclase (342 aa).

ATP contacts are provided by residues Gln100 and 283–287; that span reads FLGDQ. His307 serves as the catalytic Tele-AMP-histidine intermediate.

It belongs to the RNA 3'-terminal cyclase family. Type 1 subfamily.

It localises to the cytoplasm. The enzyme catalyses a 3'-end 3'-phospho-ribonucleotide-RNA + ATP = a 3'-end 2',3'-cyclophospho-ribonucleotide-RNA + AMP + diphosphate. Catalyzes the conversion of 3'-phosphate to a 2',3'-cyclic phosphodiester at the end of RNA. The mechanism of action of the enzyme occurs in 3 steps: (A) adenylation of the enzyme by ATP; (B) transfer of adenylate to an RNA-N3'P to produce RNA-N3'PP5'A; (C) and attack of the adjacent 2'-hydroxyl on the 3'-phosphorus in the diester linkage to produce the cyclic end product. The biological role of this enzyme is unknown but it is likely to function in some aspects of cellular RNA processing. The polypeptide is RNA 3'-terminal phosphate cyclase (rtcA) (Pyrococcus abyssi (strain GE5 / Orsay)).